The primary structure comprises 47 residues: MARYRCCRSRSRCRRRRRRCYRRRRRCCRRRRRRRVCCRRYSRCRRR.

Belongs to the protamine P1 family. In terms of tissue distribution, testis.

The protein localises to the nucleus. It is found in the chromosome. Functionally, protamines substitute for histones in the chromatin of sperm during the haploid phase of spermatogenesis. They compact sperm DNA into a highly condensed, stable and inactive complex. This Myotis daubentonii (Daubenton's bat) protein is Sperm protamine P1 (PRM1).